The following is a 189-amino-acid chain: Large ribosomal subunit protein bL9 (189 aa).

The protein belongs to the bacterial ribosomal protein bL9 family.

In terms of biological role, binds to the 23S rRNA. The sequence is that of Large ribosomal subunit protein bL9 from Brucella melitensis biotype 2 (strain ATCC 23457).